The chain runs to 753 residues: Taperin (753 aa).

A disordered region spans residues 141-348; that stretch reads FDSPAAPRRR…IRPSSKPDME (208 aa). A compositionally biased stretch (pro residues) spans 182–197; it reads PAPPVLPSQPAPPISP. Composition is skewed to polar residues over residues 230–239 and 250–263; these read LQKTGSNSFT and VNRS…TQES. The residue at position 274 (Ser-274) is a Phosphoserine. Positions 300–322 are enriched in low complexity; that stretch reads TPSATPVGPPAFLAPSPASATPS. Residues 323-335 are compositionally biased toward polar residues; the sequence is QRQWVSSATSAND. Basic and acidic residues predominate over residues 337–347; the sequence is FEIRPSSKPDM. 3 positions are modified to phosphoserine: Ser-402, Ser-458, and Ser-502. Residues 438 to 488 are disordered; that stretch reads GCPRPAISDTDKSVRRQRPASPPPFLPATTEAEPAEGLGVPGLTKNGQEPV. Disordered stretches follow at residues 544–583 and 637–676; these read FTVV…SGPH and FEYP…DSEK. Residues 559–571 show a composition bias toward polar residues; sequence HLSQTNGQFQQGA. Over residues 648–672 the composition is skewed to acidic residues; sequence EEAEEEEEEEEEEEGEDGEEEEVGP.

The protein belongs to the taperin family. Interacts with GRXCR2; the interaction restricts TPRN to the stereocilum basal region. Interacts with actin ACTB; the interaction may stabilize stereocilia. Interacts with CLIC5. Interacts with PTPRQ. TPRN, CLIC5 and PTPQR form concentric rings at the base of stereocilia and may form a complex. Interacts with phosphatase PPP1CA; the interaction results in inhibition of PPC1A phosphatase activity. Interacts with DNA damage response proteins XRCC6/KU70, XRCC5/KU80, PARP1, TOP1 and TOP2A; these interactions recruit TPRN to sites of DNA damage where it may play a role in DNA repair.

Its subcellular location is the cell projection. The protein resides in the stereocilium. It localises to the microvillus. It is found in the nucleus. The protein localises to the nucleoplasm. Its subcellular location is the cytoplasm. Essential for hearing. Required for maintenance of stereocilia on both inner and outer hair cells. Necessary for the integrity of the stereociliary rootlet. May act as an actin cytoskeleton regulator involved in the regulation of actin dynamics at the pointed end in hair cells. Forms rings at the base of stereocilia and binds actin filaments in the stereocilia which may stabilize the stereocilia. Acts as a strong inhibitor of PPP1CA phosphatase activity. Recruited to sites of DNA damage and may play a role in DNA damage repair. The chain is Taperin (Tprn) from Rattus norvegicus (Rat).